Reading from the N-terminus, the 384-residue chain is Protein V (384 aa).

Disordered regions lie at residues 1 to 23 and 38 to 317; these read MDQDAFILKEDSEVEREAPGGRE and SEPT…TKKG. The span at 7-20 shows a compositional bias: basic and acidic residues; that stretch reads ILKEDSEVEREAPG. A compositionally biased stretch (polar residues) spans 50–59; it reads LHNTINTPQG. Position 68 is a phosphoserine; by host (Ser-68). Positions 83–101 are enriched in basic and acidic residues; sequence RSGEESRVSGRTSKPEAEA. Ser-125 carries the post-translational modification Phosphoserine; by host. A compositionally biased stretch (basic and acidic residues) spans 150-168; sequence GIEDENREMAAHPDKRGED. Residues 191 to 206 show a composition bias toward polar residues; sequence ASNNGRSMEPGSSHSA. 4 positions are modified to phosphoserine; by host: Ser-192, Ser-249, Ser-257, and Ser-260. Positions 318, 337, 341, 353, 355, 358, 362, and 365 each coordinate Zn(2+).

This sequence belongs to the paramyxoviruses V protein family. Interacts with host IFIH1/MDA5 and DHX58/LGP2. Interacts with host IRF3. Interacts with host RIGI regulatory protein (via CARDs domain) and host TRIM25 (via SPRY domain); these interactions prevent TRIM25-mediated ubiquitination of RIG-I and disrupts downstream RIG-I signaling.

The protein localises to the host cytoplasm. Its function is as follows. Plays an essential role in the inhibition of host immune response. Prevents the establishment of cellular antiviral state by blocking interferon-alpha/beta (IFN-alpha/beta) production and signaling pathway. Interacts with host IFIH1/MDA5 and DHX58/LGP2 to inhibit the transduction pathway involved in the activation of IFN-beta promoter, thus protecting the virus against cell antiviral state. Also interacts with and inhibits host IRF3. Blocks the type I interferon signaling pathway by disrupting the RIG-I signaling pathway. The polypeptide is Protein V (P/V/C) (Sendai virus (strain Fushimi) (SeV)).